The chain runs to 763 residues: Cadherin-like protein 26 (763 aa).

The first 20 residues, 1–20 (MDTRGCAWLLLLLSLPQGQS), serve as a signal peptide directing secretion. 4 Cadherin domains span residues 21-140 (HQPL…APQF), 141-250 (PEKE…MPTF), 251-371 (MEDR…PPAF), and 370-478 (AFHP…APTL). The Extracellular segment spans residues 21-590 (HQPLHRSKRR…SECEEPSDTW (570 aa)). 3 N-linked (GlcNAc...) asparagine glycosylation sites follow: Asn56, Asn60, and Asn146. N-linked (GlcNAc...) asparagine glycosylation is found at Asn394 and Asn440. A helical transmembrane segment spans residues 591 to 611 (LLWWALSPVGAALMVLSAALL). Topologically, residues 612–763 (CLLRCSCTFG…AMCFTSRVPS (152 aa)) are cytoplasmic.

In terms of assembly, homodimer. Component of a cadherin:catenin adhesion complex composed of at least of CDH26, beta-catenin/CTNNB1, alpha-catenin/CTNNA1 and p120 catenin/CTNND1. In terms of processing, N-glycosylated.

Its subcellular location is the cell membrane. Functionally, cadherins are calcium-dependent cell adhesion proteins. They preferentially interact with themselves in a homophilic manner in connecting cells; cadherins may thus contribute to the sorting of heterogeneous cell types. Ligand for integrins alpha-E/beta-7, ITGAE:ITGAB7, alpha-4/beta-7, ITGA4:ITGAB7 and alpha-4/beta-1, ITGA4:ITGAB1 through which modulates CD4(+) T cells activation. This chain is Cadherin-like protein 26 (Cdh26), found in Mus musculus (Mouse).